The sequence spans 122 residues: Large ribosomal subunit protein uL14 (122 aa).

This sequence belongs to the universal ribosomal protein uL14 family. Part of the 50S ribosomal subunit. Forms a cluster with proteins L3 and L19. In the 70S ribosome, L14 and L19 interact and together make contacts with the 16S rRNA in bridges B5 and B8.

In terms of biological role, binds to 23S rRNA. Forms part of two intersubunit bridges in the 70S ribosome. This chain is Large ribosomal subunit protein uL14, found in Campylobacter lari (strain RM2100 / D67 / ATCC BAA-1060).